A 494-amino-acid chain; its full sequence is Lysine--tRNA ligase (494 aa).

2 residues coordinate Mg(2+): E399 and E406.

It belongs to the class-II aminoacyl-tRNA synthetase family. Mg(2+) is required as a cofactor.

Its subcellular location is the cytoplasm. The catalysed reaction is tRNA(Lys) + L-lysine + ATP = L-lysyl-tRNA(Lys) + AMP + diphosphate. This chain is Lysine--tRNA ligase (lysS), found in Saccharolobus solfataricus (strain ATCC 35092 / DSM 1617 / JCM 11322 / P2) (Sulfolobus solfataricus).